The sequence spans 156 residues: Small ribosomal subunit protein uS7 (156 aa).

The protein belongs to the universal ribosomal protein uS7 family. In terms of assembly, part of the 30S ribosomal subunit. Contacts proteins S9 and S11.

Functionally, one of the primary rRNA binding proteins, it binds directly to 16S rRNA where it nucleates assembly of the head domain of the 30S subunit. Is located at the subunit interface close to the decoding center, probably blocks exit of the E-site tRNA. The chain is Small ribosomal subunit protein uS7 from Anaeromyxobacter dehalogenans (strain 2CP-C).